The sequence spans 233 residues: Phosphatidylserine decarboxylase proenzyme (233 aa).

Residue serine 190 is the Schiff-base intermediate with substrate; via pyruvic acid of the active site. Serine 190 bears the Pyruvic acid (Ser); by autocatalysis mark.

The protein belongs to the phosphatidylserine decarboxylase family. PSD-A subfamily. As to quaternary structure, heterodimer of a large membrane-associated beta subunit and a small pyruvoyl-containing alpha subunit. It depends on pyruvate as a cofactor. In terms of processing, is synthesized initially as an inactive proenzyme. Formation of the active enzyme involves a self-maturation process in which the active site pyruvoyl group is generated from an internal serine residue via an autocatalytic post-translational modification. Two non-identical subunits are generated from the proenzyme in this reaction, and the pyruvate is formed at the N-terminus of the alpha chain, which is derived from the carboxyl end of the proenzyme. The post-translation cleavage follows an unusual pathway, termed non-hydrolytic serinolysis, in which the side chain hydroxyl group of the serine supplies its oxygen atom to form the C-terminus of the beta chain, while the remainder of the serine residue undergoes an oxidative deamination to produce ammonia and the pyruvoyl prosthetic group on the alpha chain.

It is found in the cell membrane. It catalyses the reaction a 1,2-diacyl-sn-glycero-3-phospho-L-serine + H(+) = a 1,2-diacyl-sn-glycero-3-phosphoethanolamine + CO2. It functions in the pathway phospholipid metabolism; phosphatidylethanolamine biosynthesis; phosphatidylethanolamine from CDP-diacylglycerol: step 2/2. Its function is as follows. Catalyzes the formation of phosphatidylethanolamine (PtdEtn) from phosphatidylserine (PtdSer). This is Phosphatidylserine decarboxylase proenzyme from Bartonella quintana (strain Toulouse) (Rochalimaea quintana).